Here is a 205-residue protein sequence, read N- to C-terminus: Cytochrome c biogenesis ATP-binding export protein CcmA (205 aa).

Residues 2-204 form the ABC transporter domain; that stretch reads LEVSNLTAIR…SPKLRKIKLG (203 aa). 34–41 lines the ATP pocket; it reads GRNGTGKT.

Belongs to the ABC transporter superfamily. CcmA exporter (TC 3.A.1.107) family. In terms of assembly, the complex is composed of two ATP-binding proteins (CcmA) and two transmembrane proteins (CcmB).

Its subcellular location is the cell inner membrane. It carries out the reaction heme b(in) + ATP + H2O = heme b(out) + ADP + phosphate + H(+). In terms of biological role, part of the ABC transporter complex CcmAB involved in the biogenesis of c-type cytochromes; once thought to export heme, this seems not to be the case, but its exact role is uncertain. Responsible for energy coupling to the transport system. The protein is Cytochrome c biogenesis ATP-binding export protein CcmA of Vibrio vulnificus (strain CMCP6).